A 291-amino-acid polypeptide reads, in one-letter code: Nucleotide-binding protein lin2617 (291 aa).

Residue 13–20 coordinates ATP; the sequence is GMSGAGKT. 63–66 lines the GTP pocket; sequence DLRG.

The protein belongs to the RapZ-like family.

In terms of biological role, displays ATPase and GTPase activities. The polypeptide is Nucleotide-binding protein lin2617 (Listeria innocua serovar 6a (strain ATCC BAA-680 / CLIP 11262)).